The sequence spans 864 residues: DNA mismatch repair protein MutS (864 aa).

607–614 is a binding site for ATP; that stretch reads GPNMGGKS.

Belongs to the DNA mismatch repair MutS family.

Functionally, this protein is involved in the repair of mismatches in DNA. It is possible that it carries out the mismatch recognition step. This protein has a weak ATPase activity. The protein is DNA mismatch repair protein MutS of Neisseria meningitidis serogroup C (strain 053442).